A 539-amino-acid polypeptide reads, in one-letter code: MIO-dependent tyrosine 2,3-aminomutase (539 aa).

Tyrosine 63 acts as the Proton donor/acceptor in catalysis. Histidine 93 provides a ligand contact to substrate. Positions 152–154 (ASG) form a cross-link, 5-imidazolinone (Ala-Gly). Serine 153 carries the post-translational modification 2,3-didehydroalanine (Ser). Substrate is bound by residues asparagine 205 and arginine 311.

Belongs to the TAL/TAM family. In terms of assembly, homotetramer; dimer of dimers. In terms of processing, contains an active site 4-methylidene-imidazol-5-one (MIO), which is formed autocatalytically by cyclization and dehydration of residues Ala-Ser-Gly.

The catalysed reaction is L-tyrosine = 3-amino-3-(4-hydroxyphenyl)propanoate. The enzyme catalyses L-tyrosine = (E)-4-coumarate + NH4(+). Functionally, involved in the biosynthesis of the enediyne antitumor antibiotic C-1027. Catalyzes the MIO-dependent deamination of L-tyrosine generating the corresponding alpha,beta-unsaturated acid, (S)-beta-tyrosine. This Streptomyces globisporus protein is MIO-dependent tyrosine 2,3-aminomutase.